A 765-amino-acid chain; its full sequence is DNA topoisomerase 1 (765 aa).

Over residues 1-23 (MSGDHLHNDSQIEADFRLNDSHK) the composition is skewed to basic and acidic residues. The disordered stretch occupies residues 1–199 (MSGDHLHNDS…NKKKKPKKEE (199 aa)). Ser-2 bears the N-acetylserine mark. Phosphoserine is present on residues Ser-2 and Ser-10. Positions 24 to 39 (HKDKHKDREHRHKEHK) are enriched in basic residues. Positions 40 to 108 (KEKDREKSKH…DAKIKKEKEN (69 aa)) are enriched in basic and acidic residues. Ser-57 carries the post-translational modification Phosphoserine. Lys-101 is covalently cross-linked (Glycyl lysine isopeptide (Lys-Gly) (interchain with G-Cter in SUMO2)). Residue Lys-103 forms a Glycyl lysine isopeptide (Lys-Gly) (interchain with G-Cter in SUMO); alternate linkage. Lys-103 participates in a covalent cross-link: Glycyl lysine isopeptide (Lys-Gly) (interchain with G-Cter in SUMO2); alternate. Ser-112 is modified (phosphoserine). Lys-117 participates in a covalent cross-link: Glycyl lysine isopeptide (Lys-Gly) (interchain with G-Cter in SUMO); alternate. Lys-117 is covalently cross-linked (Glycyl lysine isopeptide (Lys-Gly) (interchain with G-Cter in SUMO2); alternate). Residue Lys-117 forms a Glycyl lysine isopeptide (Lys-Gly) (interchain with G-Cter in SUMO1); alternate linkage. Over residues 129 to 166 (PKEDIKPLKRPRDEDDADYKPKKIKTEDTKKEKKRKLE) the composition is skewed to basic and acidic residues. Glycyl lysine isopeptide (Lys-Gly) (interchain with G-Cter in SUMO2) cross-links involve residues Lys-134 and Lys-148. A Glycyl lysine isopeptide (Lys-Gly) (interchain with G-Cter in SUMO); alternate cross-link involves residue Lys-153. Residue Lys-153 forms a Glycyl lysine isopeptide (Lys-Gly) (interchain with G-Cter in SUMO2); alternate linkage. Residues Lys-158 and Lys-164 each participate in a glycyl lysine isopeptide (Lys-Gly) (interchain with G-Cter in SUMO2) cross-link. Lys-172 is covalently cross-linked (Glycyl lysine isopeptide (Lys-Gly) (interchain with G-Cter in SUMO2); alternate). The residue at position 172 (Lys-172) is an N6-acetyllysine; alternate. Basic and acidic residues predominate over residues 179-199 (KDKDKKVPEPDNKKKKPKKEE). A Glycyl lysine isopeptide (Lys-Gly) (interchain with G-Cter in SUMO2) cross-link involves residue Lys-204. Lys-280 bears the N6-acetyllysine mark. A Glycyl lysine isopeptide (Lys-Gly) (interchain with G-Cter in SUMO2) cross-link involves residue Lys-336. 2 interaction with DNA regions span residues 425-426 (KY) and 488-493 (RAGNEK). The Topo IB-type catalytic domain maps to 432–765 (SSRIKGEKDW…IDMADEDYEF (334 aa)). Position 506 is a phosphoserine; by CK2 (Ser-506). Lys-549 is covalently cross-linked (Glycyl lysine isopeptide (Lys-Gly) (interchain with G-Cter in SUMO2)). Positions 585 to 587 (TAK) are interaction with DNA. Glycyl lysine isopeptide (Lys-Gly) (interchain with G-Cter in SUMO2) cross-links involve residues Lys-642, Lys-700, and Lys-712. Tyr-723 functions as the O-(3'-phospho-DNA)-tyrosine intermediate in the catalytic mechanism.

It belongs to the type IB topoisomerase family. In terms of assembly, monomer. Interacts with ERCC6. Interacts with TPRN; TPRN interacts with a number of DNA damage response proteins, is recruited to sites of DNA damage and may play a role in DNA damage repair. (Microbial infection) Interacts with SV40 Large T antigen; this interactions allows viral DNA replication. Post-translationally, sumoylated. Lys-117 is the main site of sumoylation. Sumoylation plays a role in partitioning TOP1 between nucleoli and nucleoplasm. Levels are dramatically increased on camptothecin (CPT) treatment. Phosphorylation at Ser-506 by CK2 increases binding to supercoiled DNA and sensitivity to camptothecin. In terms of tissue distribution, endothelial cells.

It localises to the nucleus. Its subcellular location is the nucleolus. The protein localises to the nucleoplasm. It carries out the reaction ATP-independent breakage of single-stranded DNA, followed by passage and rejoining.. With respect to regulation, specifically inhibited by camptothecin (CPT), a plant alkaloid with antitumor activity. Releases the supercoiling and torsional tension of DNA introduced during the DNA replication and transcription by transiently cleaving and rejoining one strand of the DNA duplex. Introduces a single-strand break via transesterification at a target site in duplex DNA. The scissile phosphodiester is attacked by the catalytic tyrosine of the enzyme, resulting in the formation of a DNA-(3'-phosphotyrosyl)-enzyme intermediate and the expulsion of a 5'-OH DNA strand. The free DNA strand then rotates around the intact phosphodiester bond on the opposing strand, thus removing DNA supercoils. Finally, in the religation step, the DNA 5'-OH attacks the covalent intermediate to expel the active-site tyrosine and restore the DNA phosphodiester backbone. Regulates the alternative splicing of tissue factor (F3) pre-mRNA in endothelial cells. Involved in the circadian transcription of the core circadian clock component BMAL1 by altering the chromatin structure around the ROR response elements (ROREs) on the BMAL1 promoter. The chain is DNA topoisomerase 1 (TOP1) from Homo sapiens (Human).